The sequence spans 503 residues: Probable cytosol aminopeptidase (503 aa).

Mn(2+) contacts are provided by Lys274 and Asp279. Residue Lys286 is part of the active site. Asp297, Asp356, and Glu358 together coordinate Mn(2+). Arg360 is an active-site residue.

It belongs to the peptidase M17 family. It depends on Mn(2+) as a cofactor.

It localises to the cytoplasm. The enzyme catalyses Release of an N-terminal amino acid, Xaa-|-Yaa-, in which Xaa is preferably Leu, but may be other amino acids including Pro although not Arg or Lys, and Yaa may be Pro. Amino acid amides and methyl esters are also readily hydrolyzed, but rates on arylamides are exceedingly low.. The catalysed reaction is Release of an N-terminal amino acid, preferentially leucine, but not glutamic or aspartic acids.. Functionally, presumably involved in the processing and regular turnover of intracellular proteins. Catalyzes the removal of unsubstituted N-terminal amino acids from various peptides. The protein is Probable cytosol aminopeptidase of Burkholderia orbicola (strain AU 1054).